A 718-amino-acid polypeptide reads, in one-letter code: U-box domain-containing protein 5 (718 aa).

Positions 218–292 (TLPEKFKCTL…SEWCAKNGLD (75 aa)) constitute a U-box domain. 3 ARM repeats span residues 493 to 532 (PHGPSKITSSGSLSSLLKIVESQAEHLQEQAMITLKNLSS), 534 to 571 (MEICLEMVSLDFIQKLTSFLQQKVFCKHSIIILKNLCS), and 573 to 613 (EKGR…QLCV). A disordered region spans residues 662 to 704 (KEEEEEVSSRPEGRTTASPTSQVVTPVTHPEPVKITPSPKKSG). The segment covering 676-686 (TTASPTSQVVT) has biased composition (polar residues).

It carries out the reaction S-ubiquitinyl-[E2 ubiquitin-conjugating enzyme]-L-cysteine + [acceptor protein]-L-lysine = [E2 ubiquitin-conjugating enzyme]-L-cysteine + N(6)-ubiquitinyl-[acceptor protein]-L-lysine.. It participates in protein modification; protein ubiquitination. In terms of biological role, functions as an E3 ubiquitin ligase. This Arabidopsis thaliana (Mouse-ear cress) protein is U-box domain-containing protein 5 (PUB5).